A 132-amino-acid chain; its full sequence is Ribosome-binding factor A (132 aa).

The tract at residues 113 to 132 (EANSTRAKDDDEADTPAKDD) is disordered.

This sequence belongs to the RbfA family. As to quaternary structure, monomer. Binds 30S ribosomal subunits, but not 50S ribosomal subunits or 70S ribosomes.

It is found in the cytoplasm. In terms of biological role, one of several proteins that assist in the late maturation steps of the functional core of the 30S ribosomal subunit. Associates with free 30S ribosomal subunits (but not with 30S subunits that are part of 70S ribosomes or polysomes). Required for efficient processing of 16S rRNA. May interact with the 5'-terminal helix region of 16S rRNA. The polypeptide is Ribosome-binding factor A (Burkholderia cenocepacia (strain HI2424)).